Consider the following 423-residue polypeptide: Osteomodulin (423 aa).

The first 20 residues, 1–20, serve as a signal peptide directing secretion; the sequence is MGFLSPIYVLFFCFGVRVYC. 6 positions are modified to sulfotyrosine: Tyr22, Tyr25, Tyr31, Tyr39, Tyr51, and Tyr77. In terms of domain architecture, LRRNT spans 53–91; the sequence is VPFYNNILGCAKECFCPTNFPTSMYCDNRKLKTIPIIPM. LRR repeat units lie at residues 92-113, 116-129, 142-164, 165-184, 187-207, 213-233, 234-255, 258-279, 281-294, 301-322, and 331-353; these read HIQQ…SFIN, HLKE…KIKS, NLQQ…PKSL, ERLL…AMDG, NVTM…KEKT, KLMQ…GLPS, SLMY…YFDK, KLHA…IFNL, NLIE…KLKQ, NLEH…MICP, and HLTY…IFFC. N-linked (GlcNAc...) asparagine glycans are attached at residues Asn113 and Asn121. Asn187 carries N-linked (GlcNAc...) asparagine glycosylation. 2 N-linked (GlcNAc...) asparagine glycosylation sites follow: Asn242 and Asn278. The N-linked (GlcNAc...) asparagine glycan is linked to Asn316. An intrachain disulfide couples Cys321 to Cys353. Residues 381–406 form a disordered region; that stretch reads RSYQEEEEEDDHDSQDNTLEGQEVSD. Sulfotyrosine occurs at positions 413 and 414.

This sequence belongs to the small leucine-rich proteoglycan (SLRP) family. SLRP class II subfamily. In terms of assembly, binds the alpha(V)beta(3)-integrin. In terms of processing, glycosylated; contains keratan sulfate. In terms of tissue distribution, bone specific.

The protein resides in the secreted. It localises to the extracellular space. Its subcellular location is the extracellular matrix. Functionally, may be implicated in biomineralization processes. Has a function in binding of osteoblasts via the alpha(V)beta(3)-integrin. This Mus musculus (Mouse) protein is Osteomodulin (Omd).